The primary structure comprises 213 residues: Holliday junction resolvase RecU (213 aa).

Residues Thr-99, Asp-101, Glu-114, and Gln-133 each contribute to the Mg(2+) site.

This sequence belongs to the RecU family. The cofactor is Mg(2+).

It localises to the cytoplasm. It catalyses the reaction Endonucleolytic cleavage at a junction such as a reciprocal single-stranded crossover between two homologous DNA duplexes (Holliday junction).. In terms of biological role, endonuclease that resolves Holliday junction intermediates in genetic recombination. Cleaves mobile four-strand junctions by introducing symmetrical nicks in paired strands. Promotes annealing of linear ssDNA with homologous dsDNA. Required for DNA repair, homologous recombination and chromosome segregation. This chain is Holliday junction resolvase RecU, found in Lactococcus lactis subsp. lactis (strain IL1403) (Streptococcus lactis).